We begin with the raw amino-acid sequence, 901 residues long: HTH-type transcriptional regulator MalT (901 aa).

39–46 (SPAGYGKT) is a binding site for ATP. One can recognise an HTH luxR-type domain in the interval 829–894 (ELIRTSPLTQ…DAVQHAQQLL (66 aa)). Residues 853 to 872 (NEQIAGELAVAATTIKTHIR) constitute a DNA-binding region (H-T-H motif).

It belongs to the MalT family. In terms of assembly, monomer in solution. Oligomerizes to an active state in the presence of the positive effectors ATP and maltotriose.

Its activity is regulated as follows. Activated by ATP and maltotriose, which are both required for DNA binding. Positively regulates the transcription of the maltose regulon whose gene products are responsible for uptake and catabolism of malto-oligosaccharides. Specifically binds to the promoter region of its target genes, recognizing a short DNA motif called the MalT box. The chain is HTH-type transcriptional regulator MalT from Enterobacter sp. (strain 638).